The following is a 339-amino-acid chain: Beta-ketoacyl-[acyl-carrier-protein] synthase III (339 aa).

Active-site residues include C119 and H262. Residues 263-267 (QANQR) form an ACP-binding region. N292 is a catalytic residue.

It belongs to the thiolase-like superfamily. FabH family. As to quaternary structure, homodimer.

The protein localises to the cytoplasm. The enzyme catalyses malonyl-[ACP] + acetyl-CoA + H(+) = 3-oxobutanoyl-[ACP] + CO2 + CoA. The protein operates within lipid metabolism; fatty acid biosynthesis. Its function is as follows. Catalyzes the condensation reaction of fatty acid synthesis by the addition to an acyl acceptor of two carbons from malonyl-ACP. Catalyzes the first condensation reaction which initiates fatty acid synthesis and may therefore play a role in governing the total rate of fatty acid production. Possesses both acetoacetyl-ACP synthase and acetyl transacylase activities. Its substrate specificity determines the biosynthesis of branched-chain and/or straight-chain of fatty acids. The chain is Beta-ketoacyl-[acyl-carrier-protein] synthase III from Prochlorococcus marinus (strain MIT 9313).